The chain runs to 380 residues: GDP-mannose:cellobiosyl-diphosphopolyprenol alpha-mannosyltransferase (380 aa).

This sequence belongs to the glycosyltransferase group 1 family. Glycosyltransferase 4 subfamily.

It carries out the reaction beta-D-Glc-(1-&gt;4)-alpha-D-Glc-di-trans,octa-cis-undecaprenyl diphosphate + GDP-alpha-D-mannose = alpha-D-Man-(1-&gt;3)-beta-D-Glc-(1-&gt;4)-alpha-D-Glc-1-di-trans,octa-cis-undecaprenyl diphosphate + GDP + H(+). In terms of biological role, involved in the biosynthesis of the exopolysaccharide xanthan, a polymer that is comprised of repeating pentasaccharide units with the structure of a beta-(1,4)-linked D-glucose backbone with trisaccharide side chains composed of mannose-beta-(1,4)-glucuronic acid-beta-(1,2)-mannose attached to alternate glucose residues in the backbone by alpha-(1,3) linkages. Xanthan is involved in pathogenicity but has also been used in a variety of applications as a specialty polymer for commercial applications, including food additives, where they act as viscosifying, stabilizing, emulsifying, or gelling agents. The protein is GDP-mannose:cellobiosyl-diphosphopolyprenol alpha-mannosyltransferase (gumH) of Xanthomonas oryzae pv. oryzae (strain PXO99A).